The sequence spans 441 residues: Chitinase-like protein Idgf3 (441 aa).

Positions 1 to 23 (MSGSLWLSLALSLAVLAQFKVSA) are cleaved as a signal peptide. Positions 25–441 (PNLVCFYDSQ…MLRAIKYRLL (417 aa)) constitute a GH18 domain. The cysteines at positions 29 and 56 are disulfide-linked. N-linked (GlcNAc...) asparagine glycosylation occurs at Asn221. The disordered stretch occupies residues 310–331 (GDSGMPVVSSTQGPAPAGPQSK). Cys342 and Cys425 form a disulfide bridge.

The protein belongs to the glycosyl hydrolase 18 family. IDGF subfamily. In terms of processing, glycosylated.

It localises to the secreted. In terms of biological role, cooperates with insulin-like peptides to stimulate the proliferation, polarization and motility of imaginal disk cells. May act by stabilizing the binding of insulin-like peptides to its receptor through a simultaneous interaction with both molecules to form a multiprotein signaling complex. The protein is Chitinase-like protein Idgf3 (Idgf3) of Drosophila simulans (Fruit fly).